Reading from the N-terminus, the 394-residue chain is ATP phosphoribosyltransferase regulatory subunit (394 aa).

Belongs to the class-II aminoacyl-tRNA synthetase family. HisZ subfamily. In terms of assembly, heteromultimer composed of HisG and HisZ subunits.

Its subcellular location is the cytoplasm. It participates in amino-acid biosynthesis; L-histidine biosynthesis; L-histidine from 5-phospho-alpha-D-ribose 1-diphosphate: step 1/9. Functionally, required for the first step of histidine biosynthesis. May allow the feedback regulation of ATP phosphoribosyltransferase activity by histidine. This is ATP phosphoribosyltransferase regulatory subunit from Teredinibacter turnerae (strain ATCC 39867 / T7901).